Consider the following 197-residue polypeptide: Imidazoleglycerol-phosphate dehydratase (197 aa).

This sequence belongs to the imidazoleglycerol-phosphate dehydratase family.

The protein localises to the cytoplasm. It carries out the reaction D-erythro-1-(imidazol-4-yl)glycerol 3-phosphate = 3-(imidazol-4-yl)-2-oxopropyl phosphate + H2O. It functions in the pathway amino-acid biosynthesis; L-histidine biosynthesis; L-histidine from 5-phospho-alpha-D-ribose 1-diphosphate: step 6/9. This chain is Imidazoleglycerol-phosphate dehydratase, found in Methylococcus capsulatus (strain ATCC 33009 / NCIMB 11132 / Bath).